Here is a 396-residue protein sequence, read N- to C-terminus: Cytochrome P450 121 (396 aa).

Cys345 provides a ligand contact to heme.

This sequence belongs to the cytochrome P450 family. Requires heme as cofactor.

The protein resides in the cytoplasm. The chain is Cytochrome P450 121 (cyp121) from Mycobacterium bovis (strain ATCC BAA-935 / AF2122/97).